A 414-amino-acid polypeptide reads, in one-letter code: Wilms tumor protein homolog A (414 aa).

Glycyl lysine isopeptide (Lys-Gly) (interchain with G-Cter in SUMO) cross-links involve residues K55 and K158. A 9aaTAD motif is present at residues M217–G225. 3 C2H2-type zinc fingers span residues F288 to H312, Y318 to H342, and F348 to H370. Important for interaction with target DNA regions lie at residues S332–K346 and S358–H366. The short motif at K373–S375 is the KTS motif element. The segment at F379–H403 adopts a C2H2-type 4 zinc-finger fold.

Belongs to the EGR C2H2-type zinc-finger protein family. In terms of tissue distribution, expressed around the pronephric anlage and in the pronephros; expression is restricted to the splanchnic mesoderm (the site where the glomus forms) from tailbud stages, and the glomus of early tadpoles. Not expressed in the pronephric tubules or pronephric duct. In tadpoles (stage 38-39), additional expression begins in the heart. Also expressed in the adult kidney (mesonephros).

It is found in the nucleus. Its subcellular location is the cytoplasm. The protein localises to the nucleus speckle. Transcription factor required for development of the vascular component of the pronephric kidney, the glomus; may repress tubule-specific gene expression in the portion of the pronephros fated to form the glomus. Recognizes and binds to the DNA sequence 5'-GCG(T/G)GGGCG-3'. Inhibits Wnt-signaling during embryonic development. Function may be isoform-specific: the isoform containing the KTS motif is less effective in inhibiting wnt signaling. This chain is Wilms tumor protein homolog A (wt1-a), found in Xenopus laevis (African clawed frog).